The following is an 89-amino-acid chain: Small ribosomal subunit protein uS15 (89 aa).

Belongs to the universal ribosomal protein uS15 family. As to quaternary structure, part of the 30S ribosomal subunit. Forms a bridge to the 50S subunit in the 70S ribosome, contacting the 23S rRNA.

In terms of biological role, one of the primary rRNA binding proteins, it binds directly to 16S rRNA where it helps nucleate assembly of the platform of the 30S subunit by binding and bridging several RNA helices of the 16S rRNA. Its function is as follows. Forms an intersubunit bridge (bridge B4) with the 23S rRNA of the 50S subunit in the ribosome. The protein is Small ribosomal subunit protein uS15 of Streptococcus equi subsp. zooepidemicus (strain H70).